A 754-amino-acid chain; its full sequence is Ubiquitin carboxyl-terminal hydrolase 9 (754 aa).

Positions 1–14 are enriched in basic residues; it reads MIKRWLSVNRKKSH. The tract at residues 1 to 76 is disordered; the sequence is MIKRWLSVNR…SKFSSQTDNL (76 aa). The span at 42–58 shows a compositional bias: low complexity; it reads SIAKSPSAKSSTSSIPS. The region spanning 134 to 667 is the USP domain; the sequence is FGYENFGNTC…TAYVLFYKET (534 aa). The Nucleophile role is filled by Cys-143. Polar residues predominate over residues 194–209; the sequence is ETSTNSGNSNTGYQSN. The interval 194–273 is disordered; sequence ETSTNSGNSN…DNNEMERPQP (80 aa). The span at 222–233 shows a compositional bias: low complexity; sequence QSDQDNSSSSTQ. Over residues 250 to 272 the composition is skewed to basic and acidic residues; that stretch reads GKDKSNYKDSAKKDDNNEMERPQ. The active-site Proton acceptor is His-618. The disordered stretch occupies residues 726–754; sequence VKTAETKTPLNDKKRNKQKRKSRILSFIK. The segment covering 727-738 has biased composition (basic and acidic residues); it reads KTAETKTPLNDK. Basic residues predominate over residues 739–748; sequence KRNKQKRKSR.

Belongs to the peptidase C19 family.

It carries out the reaction Thiol-dependent hydrolysis of ester, thioester, amide, peptide and isopeptide bonds formed by the C-terminal Gly of ubiquitin (a 76-residue protein attached to proteins as an intracellular targeting signal).. This Saccharomyces cerevisiae (strain ATCC 204508 / S288c) (Baker's yeast) protein is Ubiquitin carboxyl-terminal hydrolase 9 (UBP9).